The chain runs to 682 residues: Transcription activator of gluconeogenesis PODANS_4_8760 (682 aa).

Residues 1-72 are disordered; that stretch reads MPEDGGPFGS…KDPLRPRRKK (72 aa). The span at 9–21 shows a compositional bias: low complexity; it reads GSEAAEASGAMSE. Basic and acidic residues-rich tracts occupy residues 29–41 and 54–67; these read HEPHHKDEDDRMS and GEVKKKYDPKDPLR. Residues 77 to 105 constitute a DNA-binding region (zn(2)-C6 fungal-type); the sequence is CYACQRAHLTCGDERPCQRCIKRGLQDSC. Disordered stretches follow at residues 122–148, 181–211, 325–375, 509–541, and 586–622; these read EALRPVLGPNYNPNAPSSRHGGQRHHS, LTESLPFNSQQSPVSPTFQQTSSNPPISGMV, PAGP…RPSK, NRNTNLGGTGVRTTPRLKSLNESSAENGGAASG, and TDKPAAGGGGGAGEEERKPDPSAAPRQQEKDSRHSIL. 3 stretches are compositionally biased toward polar residues: residues 185 to 206, 329 to 345, and 354 to 373; these read LPFNSQQSPVSPTFQQTSSNPP, TSLQSPSTENNSPQPTT, and PTMSQYPNAPGAKSSSNSRP.

The protein belongs to the ERT1/acuK family.

The protein localises to the nucleus. Its function is as follows. Transcription factor which regulates nonfermentable carbon utilization. Activator of gluconeogenetic genes. This chain is Transcription activator of gluconeogenesis PODANS_4_8760, found in Podospora anserina (strain S / ATCC MYA-4624 / DSM 980 / FGSC 10383) (Pleurage anserina).